A 453-amino-acid polypeptide reads, in one-letter code: Bifunctional protein GlmU (453 aa).

A pyrophosphorylase region spans residues 1 to 231 (MERTCLAVIL…EIEMTGCNNR (231 aa)). UDP-N-acetyl-alpha-D-glucosamine contacts are provided by residues 10 to 13 (LAAG), lysine 24, glutamine 77, 82 to 83 (GT), 105 to 107 (YGD), glycine 143, glutamate 157, asparagine 172, and asparagine 229. Aspartate 107 contributes to the Mg(2+) binding site. Asparagine 229 is a Mg(2+) binding site. The interval 232 to 252 (AELAVIERFWQERRRREMMLA) is linker. The segment at 253-453 (GVTMIAPETV…AIKAAKKAEA (201 aa)) is N-acetyltransferase. The UDP-N-acetyl-alpha-D-glucosamine site is built by arginine 318 and lysine 336. The Proton acceptor role is filled by histidine 348. Residues tyrosine 351 and asparagine 362 each coordinate UDP-N-acetyl-alpha-D-glucosamine. Acetyl-CoA-binding positions include alanine 365, 371-372 (NY), serine 390, serine 408, and arginine 425.

This sequence in the N-terminal section; belongs to the N-acetylglucosamine-1-phosphate uridyltransferase family. The protein in the C-terminal section; belongs to the transferase hexapeptide repeat family. As to quaternary structure, homotrimer. Mg(2+) serves as cofactor.

The protein resides in the cytoplasm. It catalyses the reaction alpha-D-glucosamine 1-phosphate + acetyl-CoA = N-acetyl-alpha-D-glucosamine 1-phosphate + CoA + H(+). The catalysed reaction is N-acetyl-alpha-D-glucosamine 1-phosphate + UTP + H(+) = UDP-N-acetyl-alpha-D-glucosamine + diphosphate. Its pathway is nucleotide-sugar biosynthesis; UDP-N-acetyl-alpha-D-glucosamine biosynthesis; N-acetyl-alpha-D-glucosamine 1-phosphate from alpha-D-glucosamine 6-phosphate (route II): step 2/2. The protein operates within nucleotide-sugar biosynthesis; UDP-N-acetyl-alpha-D-glucosamine biosynthesis; UDP-N-acetyl-alpha-D-glucosamine from N-acetyl-alpha-D-glucosamine 1-phosphate: step 1/1. It participates in bacterial outer membrane biogenesis; LPS lipid A biosynthesis. In terms of biological role, catalyzes the last two sequential reactions in the de novo biosynthetic pathway for UDP-N-acetylglucosamine (UDP-GlcNAc). The C-terminal domain catalyzes the transfer of acetyl group from acetyl coenzyme A to glucosamine-1-phosphate (GlcN-1-P) to produce N-acetylglucosamine-1-phosphate (GlcNAc-1-P), which is converted into UDP-GlcNAc by the transfer of uridine 5-monophosphate (from uridine 5-triphosphate), a reaction catalyzed by the N-terminal domain. This chain is Bifunctional protein GlmU, found in Rhizobium etli (strain ATCC 51251 / DSM 11541 / JCM 21823 / NBRC 15573 / CFN 42).